Reading from the N-terminus, the 158-residue chain is Snaclec coagulation factor X-activating enzyme light chain 2 (158 aa).

Residues 1–23 (MGRSISVSFGLLAVFLSLSGTGA) form the signal peptide. 3 cysteine pairs are disulfide-bonded: Cys-27-Cys-38, Cys-55-Cys-152, and Cys-127-Cys-144. Positions 34 to 153 (YRYFCYRVFK…CEEPYPFVCK (120 aa)) constitute a C-type lectin domain.

This sequence belongs to the snaclec family. As to quaternary structure, heterotrimer; disulfide-linked. The heterotrimer consists of 1 heavy chain (a metalloproteinase) and 2 light chains: LC1 and LC2. Expressed by the venom gland.

The protein localises to the secreted. In terms of biological role, regulatory subunit of the blood coagulation factor X-activating enzyme. Activates coagulation factor X (F10) by cleaving the Arg-Ile bond at position 234, activates coagulation factor IX (F9) by cleaving the Arg-Val bond at position 226 and is also able to activate protein C (PROC). May serve as an exosite by which the enzyme recognizes and binds to the Gla domain of factor X (F10) in a calcium-dependent manner. This Macrovipera lebetinus (Levantine viper) protein is Snaclec coagulation factor X-activating enzyme light chain 2 (LC2).